Reading from the N-terminus, the 292-residue chain is Acetylglutamate kinase (292 aa).

Residues 64-65 (GG), Arg-86, and Asn-190 each bind substrate.

Belongs to the acetylglutamate kinase family. ArgB subfamily.

It localises to the cytoplasm. It carries out the reaction N-acetyl-L-glutamate + ATP = N-acetyl-L-glutamyl 5-phosphate + ADP. The protein operates within amino-acid biosynthesis; L-arginine biosynthesis; N(2)-acetyl-L-ornithine from L-glutamate: step 2/4. Its function is as follows. Catalyzes the ATP-dependent phosphorylation of N-acetyl-L-glutamate. The sequence is that of Acetylglutamate kinase from Geobacter sulfurreducens (strain ATCC 51573 / DSM 12127 / PCA).